The primary structure comprises 192 residues: MAARDPEATKARIFEAAVAEFARHGIAGARIDRIAAEARANKQLIYAYYGNKGELFASVLEKKMLDLAISVPVDPDDIEGWIDRLLDYHAAHPELLRLLFWEGMEYGTAELPHEAERQEHYARKVAAVRDGQERGVITDAIPAPDLLFLLVAMANWAVVVPQMKRILVGGGDAGTDGLRDSIKKAARRIVDR.

The HTH tetR-type domain maps to 7 to 67; that stretch reads EATKARIFEA…SVLEKKMLDL (61 aa). The segment at residues 30-49 is a DNA-binding region (H-T-H motif); that stretch reads RIDRIAAEARANKQLIYAYY.

As to quaternary structure, homodimer. Four dimers bind to the two operator sites.

Its activity is regulated as follows. Binding of a wide range of cationic hydrophobic compounds to SCO4008 causes a decrease in DNA-binding, probably via allosteric conformational change of SCO4008. Its function is as follows. Probably regulates the expression of its own gene and the adjacent SCO4007 gene by binding to two operator sites in the SCO4007-SCO4008 intergenic region. The sequence is that of HTH-type transcriptional repressor SCO4008 from Streptomyces coelicolor (strain ATCC BAA-471 / A3(2) / M145).